A 152-amino-acid chain; its full sequence is Lipoprotein signal peptidase (152 aa).

The next 3 helical transmembrane spans lie at 5 to 25, 61 to 81, and 84 to 104; these read LFVL…FWIV, WFFV…LATH, and LNIW…GNFI. Catalysis depends on residues aspartate 114 and aspartate 130. A helical membrane pass occupies residues 125–145; sequence IFNVADSYLTVGVILLLICLW.

The protein belongs to the peptidase A8 family.

The protein resides in the cell membrane. It carries out the reaction Release of signal peptides from bacterial membrane prolipoproteins. Hydrolyzes -Xaa-Yaa-Zaa-|-(S,diacylglyceryl)Cys-, in which Xaa is hydrophobic (preferably Leu), and Yaa (Ala or Ser) and Zaa (Gly or Ala) have small, neutral side chains.. It functions in the pathway protein modification; lipoprotein biosynthesis (signal peptide cleavage). Functionally, this protein specifically catalyzes the removal of signal peptides from prolipoproteins. The sequence is that of Lipoprotein signal peptidase from Streptococcus pyogenes serotype M1.